The sequence spans 115 residues: uncharacterized protein (115 aa).

This sequence belongs to the transposase 34 family.

This is an uncharacterized protein from Sinorhizobium fredii (strain NBRC 101917 / NGR234).